The primary structure comprises 490 residues: Bifunctional protein HldE (490 aa).

The tract at residues 1 to 330 is ribokinase; sequence MLDFEAVLPA…RKVLPPASLA (330 aa). Residue 205 to 208 participates in ATP binding; that stretch reads NRKE. D275 is a catalytic residue. The cytidylyltransferase stretch occupies residues 358–490; that stretch reads FTNGCFDILH…LVARAQNGKA (133 aa).

This sequence in the N-terminal section; belongs to the carbohydrate kinase PfkB family. The protein in the C-terminal section; belongs to the cytidylyltransferase family. As to quaternary structure, homodimer.

It carries out the reaction D-glycero-beta-D-manno-heptose 7-phosphate + ATP = D-glycero-beta-D-manno-heptose 1,7-bisphosphate + ADP + H(+). The catalysed reaction is D-glycero-beta-D-manno-heptose 1-phosphate + ATP + H(+) = ADP-D-glycero-beta-D-manno-heptose + diphosphate. The protein operates within nucleotide-sugar biosynthesis; ADP-L-glycero-beta-D-manno-heptose biosynthesis; ADP-L-glycero-beta-D-manno-heptose from D-glycero-beta-D-manno-heptose 7-phosphate: step 1/4. Its pathway is nucleotide-sugar biosynthesis; ADP-L-glycero-beta-D-manno-heptose biosynthesis; ADP-L-glycero-beta-D-manno-heptose from D-glycero-beta-D-manno-heptose 7-phosphate: step 3/4. In terms of biological role, catalyzes the phosphorylation of D-glycero-D-manno-heptose 7-phosphate at the C-1 position to selectively form D-glycero-beta-D-manno-heptose-1,7-bisphosphate. Functionally, catalyzes the ADP transfer from ATP to D-glycero-beta-D-manno-heptose 1-phosphate, yielding ADP-D-glycero-beta-D-manno-heptose. The chain is Bifunctional protein HldE from Rhodopseudomonas palustris (strain BisB18).